A 340-amino-acid chain; its full sequence is Phosphoribosylformylglycinamidine cyclo-ligase (340 aa).

This sequence belongs to the AIR synthase family.

The protein resides in the cytoplasm. It carries out the reaction 2-formamido-N(1)-(5-O-phospho-beta-D-ribosyl)acetamidine + ATP = 5-amino-1-(5-phospho-beta-D-ribosyl)imidazole + ADP + phosphate + H(+). The protein operates within purine metabolism; IMP biosynthesis via de novo pathway; 5-amino-1-(5-phospho-D-ribosyl)imidazole from N(2)-formyl-N(1)-(5-phospho-D-ribosyl)glycinamide: step 2/2. This Streptococcus pyogenes serotype M12 (strain MGAS2096) protein is Phosphoribosylformylglycinamidine cyclo-ligase.